Consider the following 1161-residue polypeptide: Hamartin (1161 aa).

Residue Lys-30 forms a Glycyl lysine isopeptide (Lys-Gly) (interchain with G-Cter in ubiquitin) linkage. 2 disordered regions span residues 296–336 and 353–591; these read PYVD…PSTR and CGMT…QRGV. Residues 303–336 show a composition bias toward low complexity; the sequence is SYGGSTSTPSSSSRLMLFSPPGQLPQSLSSPSTR. Over residues 393–402 the composition is skewed to pro residues; the sequence is TSPPPAPPCP. The interval 403 to 784 is mediates interaction with WDR45B; sequence QDDCVHGSAA…QIRQLQHDRE (382 aa). The segment covering 471–484 has biased composition (basic and acidic residues); it reads EKDKEEAAISKELS. Residues Ser-484, Ser-502, Ser-508, Ser-518, Ser-592, and Ser-595 each carry the phosphoserine modification. Residues 509-529 show a composition bias toward polar residues; that stretch reads LSGSQRKTHSAASGTQGSSVN. 3 coiled-coil regions span residues 721-849, 879-917, and 967-991; these read IRAA…NRQL, TAYR…AKKD, and EKDG…ERLD. 2 disordered regions span residues 1003-1077 and 1092-1161; these read GHNE…SLPS and NKSE…PEHS. Residues 1004–1017 are compositionally biased toward basic and acidic residues; it reads HNEEASGHNGETRT. Positions 1026-1043 are enriched in low complexity; sequence SCGGRVTGGSSSSSSELS. A compositionally biased stretch (polar residues) spans 1064 to 1077; it reads PSSSIPTTVGSLPS. A Phosphoserine modification is found at Ser-1094. The segment covering 1103-1113 has biased composition (low complexity); sequence VTMSSSSLSET. Basic and acidic residues-rich tracts occupy residues 1114–1124 and 1152–1161; these read LKTELGKDSGT and DYNETHPEHS.

Component of the TSC-TBC complex (also named Rhebulator complex), composed of 2 molecules of TSC1, 2 molecules of TSC2 and 1 molecule of TBC1D7. Probably forms a complex composed of chaperones HSP90 and HSP70, co-chaperones STIP1/HOP, CDC37, PPP5C, PTGES3/p23, TSC1 and client protein TSC2. Forms a complex composed of chaperones HSP90 and HSP70, co-chaperones CDC37, PPP5C, TSC1 and client protein TSC2, CDK4, AKT, RAF1 and NR3C1; this complex does not contain co-chaperones STIP1/HOP and PTGES3/p23. Forms a complex containing HSP90AA1, TSC1 and TSC2; TSC1 is required to recruit TCS2 to the complex. Interacts (via C-terminus) with the closed form of HSP90AA1 (via the middle domain and TPR repeat-binding motif). Interacts with DOCK7. Interacts with FBXW5. Interacts with WDR45B. Interacts with RPAP3 and URI1. Post-translationally, phosphorylation at Ser-502 does not affect interaction with TSC2. In terms of processing, 'Lys-63'-linked ubiquitinated at Lys-30 by PELI1; the ubiquitination promotes TSC1/TSC2 complex stability.

It localises to the lysosome membrane. The protein localises to the cytoplasm. It is found in the cytosol. Its function is as follows. Non-catalytic component of the TSC-TBC complex, a multiprotein complex that acts as a negative regulator of the canonical mTORC1 complex, an evolutionarily conserved central nutrient sensor that stimulates anabolic reactions and macromolecule biosynthesis to promote cellular biomass generation and growth. The TSC-TBC complex acts as a GTPase-activating protein (GAP) for the small GTPase RHEB, a direct activator of the protein kinase activity of mTORC1. In absence of nutrients, the TSC-TBC complex inhibits mTORC1, thereby preventing phosphorylation of ribosomal protein S6 kinase (RPS6KB1 and RPS6KB2) and EIF4EBP1 (4E-BP1) by the mTORC1 signaling. The TSC-TBC complex is inactivated in response to nutrients, relieving inhibition of mTORC1. Within the TSC-TBC complex, TSC1 stabilizes TSC2 and prevents TSC2 self-aggregation. Involved in microtubule-mediated protein transport via its ability to regulate mTORC1 signaling. Also acts as a co-chaperone for HSP90AA1 facilitating HSP90AA1 chaperoning of protein clients such as kinases, TSC2 and glucocorticoid receptor NR3C1. Increases ATP binding to HSP90AA1 and inhibits HSP90AA1 ATPase activity. Competes with the activating co-chaperone AHSA1 for binding to HSP90AA1, thereby providing a reciprocal regulatory mechanism for chaperoning of client proteins. Recruits TSC2 to HSP90AA1 and stabilizes TSC2 by preventing the interaction between TSC2 and ubiquitin ligase HERC1. This is Hamartin from Mus musculus (Mouse).